A 397-amino-acid chain; its full sequence is Ubiquitin-like modifier-activating enzyme 5 (397 aa).

Glycine 76, aspartate 97, lysine 120, asparagine 143, and asparagine 177 together coordinate ATP. 2 residues coordinate Zn(2+): cysteine 219 and cysteine 222. Cysteine 243 serves as the catalytic Glycyl thioester intermediate. Cysteine 296 and cysteine 301 together coordinate Zn(2+). The disordered stretch occupies residues 343-384 (PSDAPTDLSQSTDVGQGLRLAYEAPEKSSAEATQAATAPVDD).

This sequence belongs to the ubiquitin-activating E1 family. UBA5 subfamily.

In terms of biological role, E1-like enzyme which activates UFM1. This is Ubiquitin-like modifier-activating enzyme 5 from Drosophila pseudoobscura pseudoobscura (Fruit fly).